The sequence spans 146 residues: UPF0178 protein BCA_3127 (146 aa).

This sequence belongs to the UPF0178 family.

The chain is UPF0178 protein BCA_3127 from Bacillus cereus (strain 03BB102).